The primary structure comprises 574 residues: MAAASSVLRCCLLVAALMTLSAMGAEAITRQYLFDVQTTSVTRLCSTKSIVTVNGQYPGPTLFAREGDHVEVTVVNHSPYNMSIHWHGIRQLLSGWADGPSYITQCPIQPGGSYVYRFTITGQRGTLWWHAHISWLRATVHGPMVILPPAGVGYPFPAPHEEVPIMFGEWWNNDTEAVISQALQTGGGPNISDAYTLNGLPGPLYNCSAQDTFKLKVKPGKTYMLRLINAALNDELFFSIANHTLTVVDVDALYVKPFTVDTLIIAPGQTSNVLLTAKPTYPGASYYMLARPYTTTQGTFDNTTVAGVLEYDDPCPTTAAGKIVPIFSPTLPQINDTNAVSNFTAKLRSLASAGYPAAVPQQVDHRFFFTVGLGTHPCAVNGTCQGPNGSRFAASINNVSFVLPATALLQSHFAGKSKGVYASNFPYYPLNPFNYTGTPPNNTNVMNGTKVLVLPYGANVELVMQDTSILGAESHPLHLHGFNFFVVGQGFGNFDPINDPAKFNLYDPVERNTVGVPAGGWVAIRFHADNPGVWFMHCHLEVHMSWGLKMAWLVLDGSRPDQKLPPPPLDLPKC.

An N-terminal signal peptide occupies residues 1–27 (MAAASSVLRCCLLVAALMTLSAMGAEA). Plastocyanin-like domains are found at residues 35 to 151 (DVQT…PPAG) and 161 to 314 (EEVP…YDDP). Asn81 carries N-linked (GlcNAc...) asparagine glycosylation. The Cu cation site is built by His85, His87, His130, and His132. Residues Asn173, Asn190, Asn206, Asn242, Asn302, Asn335, Asn342, Asn381, Asn388, Asn398, Asn434, Asn441, and Asn447 are each glycosylated (N-linked (GlcNAc...) asparagine). The Plastocyanin-like 3 domain maps to 424 to 558 (NFPYYPLNPF…KMAWLVLDGS (135 aa)). 7 residues coordinate Cu cation: His475, His478, His480, His537, Cys538, His539, and His543.

Belongs to the multicopper oxidase family. It depends on Cu cation as a cofactor.

The protein localises to the secreted. It is found in the extracellular space. The protein resides in the apoplast. It carries out the reaction 4 hydroquinone + O2 = 4 benzosemiquinone + 2 H2O. In terms of biological role, lignin degradation and detoxification of lignin-derived products. This is Laccase-12 (LAC12) from Oryza sativa subsp. japonica (Rice).